Consider the following 171-residue polypeptide: Shikimate kinase (171 aa).

Residue 14–19 (GAGKST) coordinates ATP. Serine 18 lines the Mg(2+) pocket. Aspartate 36, arginine 60, and glycine 82 together coordinate substrate. Arginine 120 serves as a coordination point for ATP. Arginine 139 serves as a coordination point for substrate. Residue glutamine 156 participates in ATP binding.

The protein belongs to the shikimate kinase family. In terms of assembly, monomer. Requires Mg(2+) as cofactor.

It localises to the cytoplasm. It catalyses the reaction shikimate + ATP = 3-phosphoshikimate + ADP + H(+). It participates in metabolic intermediate biosynthesis; chorismate biosynthesis; chorismate from D-erythrose 4-phosphate and phosphoenolpyruvate: step 5/7. Functionally, catalyzes the specific phosphorylation of the 3-hydroxyl group of shikimic acid using ATP as a cosubstrate. This chain is Shikimate kinase, found in Shewanella sp. (strain MR-4).